Reading from the N-terminus, the 224-residue chain is Urease accessory protein UreF (224 aa).

Belongs to the UreF family. UreD, UreF and UreG form a complex that acts as a GTP-hydrolysis-dependent molecular chaperone, activating the urease apoprotein by helping to assemble the nickel containing metallocenter of UreC. The UreE protein probably delivers the nickel.

The protein localises to the cytoplasm. In terms of biological role, required for maturation of urease via the functional incorporation of the urease nickel metallocenter. This chain is Urease accessory protein UreF, found in Citrobacter koseri (strain ATCC BAA-895 / CDC 4225-83 / SGSC4696).